Here is a 239-residue protein sequence, read N- to C-terminus: Fatty acid metabolism regulator protein (239 aa).

The HTH gntR-type domain maps to 6–74 (QSPAGFAEEY…HGKPTKVNNF (69 aa)). Positions 34–53 (ERELSELIGVTRTTLREVLQ) form a DNA-binding region, H-T-H motif.

As to quaternary structure, homodimer.

Its subcellular location is the cytoplasm. Multifunctional regulator of fatty acid metabolism. The chain is Fatty acid metabolism regulator protein from Cronobacter sakazakii (strain ATCC BAA-894) (Enterobacter sakazakii).